The following is a 367-amino-acid chain: Anhydro-N-acetylmuramic acid kinase (367 aa).

13-20 (GTSMDGAD) provides a ligand contact to ATP.

This sequence belongs to the anhydro-N-acetylmuramic acid kinase family.

It catalyses the reaction 1,6-anhydro-N-acetyl-beta-muramate + ATP + H2O = N-acetyl-D-muramate 6-phosphate + ADP + H(+). It participates in amino-sugar metabolism; 1,6-anhydro-N-acetylmuramate degradation. It functions in the pathway cell wall biogenesis; peptidoglycan recycling. Catalyzes the specific phosphorylation of 1,6-anhydro-N-acetylmuramic acid (anhMurNAc) with the simultaneous cleavage of the 1,6-anhydro ring, generating MurNAc-6-P. Is required for the utilization of anhMurNAc either imported from the medium or derived from its own cell wall murein, and thus plays a role in cell wall recycling. This chain is Anhydro-N-acetylmuramic acid kinase, found in Neisseria gonorrhoeae (strain ATCC 700825 / FA 1090).